A 391-amino-acid chain; its full sequence is Argininosuccinate synthase (391 aa).

Residue 6–14 (AYSGGLDTT) participates in ATP binding. Tyr-84 provides a ligand contact to L-citrulline. Gly-114 is a binding site for ATP. 3 residues coordinate L-aspartate: Thr-116, Asn-120, and Asp-121. L-citrulline is bound at residue Asn-120. Residues Arg-124, Ser-171, Ser-180, Glu-253, and Tyr-265 each contribute to the L-citrulline site.

It belongs to the argininosuccinate synthase family. Type 1 subfamily. As to quaternary structure, homotetramer.

It localises to the cytoplasm. It catalyses the reaction L-citrulline + L-aspartate + ATP = 2-(N(omega)-L-arginino)succinate + AMP + diphosphate + H(+). It functions in the pathway amino-acid biosynthesis; L-arginine biosynthesis; L-arginine from L-ornithine and carbamoyl phosphate: step 2/3. In Saccharolobus solfataricus (strain ATCC 35092 / DSM 1617 / JCM 11322 / P2) (Sulfolobus solfataricus), this protein is Argininosuccinate synthase.